The sequence spans 162 residues: MSAPRKVRLPSVKAVDMSMEDMAARLARLESENKALKQQVLRGGACASSTSVPSAPVPPPEPLTARQREVMITQATGRLASQAMKKIEDKVRKSVDGVTTRNEMENILQNLTLRIQVSMLGAKGQPSPGEGTRLRESNDPNATRRARSRSRGREAKKVQISD.

Residues 12-43 (VKAVDMSMEDMAARLARLESENKALKQQVLRG) are a coiled coil. Residues 121 to 162 (GAKGQPSPGEGTRLRESNDPNATRRARSRSRGREAKKVQISD) form a disordered region. Residues 151–162 (RGREAKKVQISD) show a composition bias toward basic and acidic residues.

This sequence belongs to the herpesviridae BLRF2 family. Homooligomer; homooligomerizes and binds double-stranded DNA (dsDNA) cooperatively. Interacts with host CGAS.

It is found in the virion tegument. Its subcellular location is the host cytoplasm. Functionally, plays a role in the inhibition of host innate immune system by targeting the CGAS enzymatic activity which is the principal cytosolic DNA sensor that detects invading viral DNA. Acts by inhibiting CGAS-DNA phase separation: directly binds double-stranded DNA (dsDNA) in a length dependent but sequence independent manner and is able to form DNA-induced phase separation in infected cells. DNA phase separation of ORF52 mediates disruption of liquid-like droplets in which CGAS is activated, thereby preventing CGAS activity. This chain is Tegument protein BLRF2, found in Epstein-Barr virus (strain GD1) (HHV-4).